A 312-amino-acid polypeptide reads, in one-letter code: Bifunctional pinoresinol-lariciresinol reductase (312 aa).

NADP(+)-binding positions include 10-16 (GGTGYLG), Arg35, and Lys44. Lys139 acts as the Proton acceptor in catalysis. Arg143 is a binding site for NADP(+). His271 serves as a coordination point for substrate.

Belongs to the NmrA-type oxidoreductase family. Isoflavone reductase subfamily. In terms of assembly, dimer. In terms of tissue distribution, expressed in young stems, young roots and petioles. In stems, expressed in radial parenchyma cells and in the cambial cells of developing secondary xylem.

The catalysed reaction is (+)-lariciresinol + NADP(+) = (+)-pinoresinol + NADPH + H(+). It catalyses the reaction (-)-secoisolariciresinol + NADP(+) = (+)-lariciresinol + NADPH + H(+). Functionally, reductase involved in lignan biosynthesis. Catalyzes the enantioselective sequential conversion of (+)-pinoresinol into (+)-lariciresinol and of (+)-lariciresinol into (-)-secoisolariciresinol. Abstracts the 4R-hydride from the NADPH cofactor during catalysis. The sequence is that of Bifunctional pinoresinol-lariciresinol reductase (PLR_Fi1) from Forsythia intermedia (Border forsythia).